Here is a 485-residue protein sequence, read N- to C-terminus: WAS/WASL-interacting protein family member 3 (485 aa).

A compositionally biased stretch (pro residues) spans M1 to P41. The disordered stretch occupies residues M1–R485. 3 short sequence motifs (profilin-binding motif) span residues V3–P8, P11–P16, and A31–P36. In terms of domain architecture, WH2 spans G56–V73. R57 is modified (asymmetric dimethylarginine). The RLRK motif lies at R69 to K72. S161 is modified (phosphoserine). The span at P176 to S203 shows a compositional bias: pro residues. At S211 the chain carries Phosphoserine. The segment covering P212 to P246 has biased composition (pro residues). The segment covering A247–L262 has biased composition (low complexity). Composition is skewed to pro residues over residues H263 to G278 and P296 to P312. S392 carries the post-translational modification Phosphoserine. Polar residues predominate over residues S392–G405. Residues A415–P439 show a composition bias toward basic and acidic residues. The WASP-binding motif motif lies at T424–V448.

As to quaternary structure, interacts with WASL, and monomeric and filamentous actin. In terms of tissue distribution, isoform 1 is expressed in brain and testis and isoform 2 is expressed only in brain (at protein level).

It localises to the cytoplasm. Its function is as follows. May be a regulator of cytoskeletal organization (Potential). May have a role in spermatogenesis. In Mus musculus (Mouse), this protein is WAS/WASL-interacting protein family member 3 (Wipf3).